Here is a 946-residue protein sequence, read N- to C-terminus: Serine/arginine repetitive matrix protein 1 (946 aa).

Methionine 1 carries the N-acetylmethionine modification. Positions 1 to 151 (MDAGFFRGTS…ASLKKQDEDK (151 aa)) are necessary for DNA and RNA-binding. Residues 1–156 (MDAGFFRGTS…QDEDKDKRDK (156 aa)) form a necessary for mRNA 3'-end cleavage and cytoplasmic accumulation region. The residue at position 7 (arginine 7) is a Citrulline. The region spanning 27-126 (QLKFAECLEK…AGIPSAFLEL (100 aa)) is the PWI domain. Lysine 127 is covalently cross-linked (Glycyl lysine isopeptide (Lys-Gly) (interchain with G-Cter in SUMO2)). Lysine 140 carries the post-translational modification N6-acetyllysine. Over residues 142 to 170 (ASLKKQDEDKDKRDKEEKESSREKRERSR) the composition is skewed to basic and acidic residues. The tract at residues 142-946 (ASLKKQDEDK…MRKAQVSPQS (805 aa)) is disordered. Over residues 171 to 207 (SPRRRKSRSPSPRRRSSPVRRERKRSHSRSPRHRTKS) the composition is skewed to basic residues. The span at 214 to 234 (PEKKEKSPELPEPSVRMKDSS) shows a compositional bias: basic and acidic residues. Phosphoserine is present on residues serine 220 and serine 227. A Glycyl lysine isopeptide (Lys-Gly) (interchain with G-Cter in SUMO1); alternate cross-link involves residue lysine 231. A Glycyl lysine isopeptide (Lys-Gly) (interchain with G-Cter in SUMO2); alternate cross-link involves residue lysine 231. Phosphoserine occurs at positions 234 and 240. The residue at position 241 (threonine 241) is a Phosphothreonine. A compositionally biased stretch (basic and acidic residues) spans 246–273 (KAPKPEPVPEPKEPSPEKNSKKEKEKTR). Lysine 249 is covalently cross-linked (Glycyl lysine isopeptide (Lys-Gly) (interchain with G-Cter in SUMO2)). Position 260 is a phosphoserine (serine 260). Basic residues-rich tracts occupy residues 274 to 327 (PRSR…RTPP) and 334 to 349 (PRHR…RRRS). A necessary for speckles and matrix localization region spans residues 298–707 (RRHRSRSRSY…NKRHSPSPRP (410 aa)). Positions 350-366 (SASLSGSSSSSSSSRSR) are enriched in low complexity. A phosphoserine mark is found at serine 387, serine 389, serine 391, and serine 400. Threonine 404 carries the post-translational modification Phosphothreonine. Serine 412 bears the Phosphoserine mark. The residue at position 414 (threonine 414) is a Phosphothreonine. Residues serine 418, serine 427, serine 429, and serine 434 each carry the phosphoserine modification. Residues 426-436 (VSVSPGRTSGK) are compositionally biased toward polar residues. A Glycyl lysine isopeptide (Lys-Gly) (interchain with G-Cter in SUMO2) cross-link involves residue lysine 445. A phosphoserine mark is found at serine 448 and serine 450. Lysine 457 participates in a covalent cross-link: Glycyl lysine isopeptide (Lys-Gly) (interchain with G-Cter in SUMO2). A phosphoserine mark is found at serine 461 and serine 463. Residue lysine 470 forms a Glycyl lysine isopeptide (Lys-Gly) (interchain with G-Cter in SUMO2) linkage. Serine 476 carries the post-translational modification Phosphoserine. Residues 476–499 (SVQQRRQYRRQNQQSSSDSGSSST) show a composition bias toward low complexity. The segment covering 501–516 (EDERPKRSHVKNGEVG) has biased composition (basic and acidic residues). Phosphoserine is present on residues serine 522, serine 524, serine 526, serine 528, serine 530, serine 561, serine 563, serine 572, and serine 574. A compositionally biased stretch (basic residues) spans 555-572 (SSRRRRSPSPPPARRRRS). The span at 574–585 (SPAPPPPPPPPP) shows a compositional bias: pro residues. Basic residues predominate over residues 586–611 (PRRRRSPTPPPRRRTPSPPPRRRSPS). A phosphothreonine mark is found at threonine 593 and threonine 600. Serine 602 is subject to Phosphoserine. The segment covering 612–624 (PRRYSPPIQRRYS) has biased composition (low complexity). Position 615 is a phosphotyrosine (tyrosine 615). Phosphoserine is present on residues serine 616, serine 624, and serine 626. Phosphothreonine is present on threonine 633. Serine 635, serine 645, serine 647, serine 655, and serine 657 each carry phosphoserine. Basic residues predominate over residues 640-655 (PKRRASPSPPPKRRVS). The span at 668 to 682 (TKRRSPSLSSKHRKG) shows a compositional bias: basic residues. Over residues 704 to 718 (SPRPRAPQTSSPPPV) the composition is skewed to pro residues. Serine 713, serine 714, serine 723, serine 725, serine 731, and serine 733 each carry phosphoserine. Positions 724–736 (ASPQGRQSPSPST) are enriched in polar residues. Threonine 736 is modified (phosphothreonine). Phosphoserine occurs at positions 779, 781, 789, 793, 795, 797, 810, 814, 816, and 818. A compositionally biased stretch (low complexity) spans 779–800 (SPSPQSVRRVSSSRSVSGSPEP). Residue threonine 819 is modified to Phosphothreonine. 2 positions are modified to phosphoserine: serine 822 and serine 832. Over residues 833–842 (PTPSLSPARN) the composition is skewed to polar residues. At threonine 834 the chain carries Phosphothreonine. 3 positions are modified to phosphoserine: serine 836, serine 838, and serine 843. A compositionally biased stretch (basic residues) spans 850–875 (KKKKKKKDKKHKKDKKHKKHKKHKKE). A compositionally biased stretch (low complexity) spans 878–907 (VTIATPATAAPAAVSAATTTSAQEEPAAAP). Residue threonine 913 is modified to Phosphothreonine. Serine 915 carries the post-translational modification Phosphoserine. The segment covering 924-934 (DLERHLREKAL) has biased composition (basic and acidic residues). At serine 943 the chain carries Phosphoserine.

Belongs to the splicing factor SR family. Identified in the spliceosome C complex. Found in a pre-mRNA splicing complex with SFRS4, SFRS5, SNRP70, SNRPA1, SRRM1 and SRRM2. Component of the minor spliceosome, which splices U12-type introns. Found in a pre-mRNA exonic splicing enhancer (ESE) complex with SNRP70, SNRPA1, SRRM1 and TRA2B/SFRS10. Found in a mRNA splicing-dependent exon junction complex (EJC) with DEK, PRPF8, NCBP1, RBM8A, RNPS1, SRRM1 and ALYREF/THOC4. Interacts with DDX39B, CPSF1, RBM8A, RNPS1, and ALYREF/THOC4. Seems to be a compound of RNA export complexes that are released from speckles in a ATP-dependent manner. Post-translationally, citrullinated by PADI4. In terms of processing, phosphorylated on multiple serine and threonine residues by DYRK3 during the G2-to-M transition, after the nuclear-envelope breakdown. Phosphorylation by DYRK3 promotes disassembly of nuclear speckles.

It is found in the nucleus matrix. The protein resides in the nucleus speckle. Its function is as follows. Part of pre- and post-splicing multiprotein mRNP complexes. As a component of the minor spliceosome, involved in the splicing of U12-type introns in pre-mRNAs. Involved in numerous pre-mRNA processing events. Promotes constitutive and exonic splicing enhancer (ESE)-dependent splicing activation by bridging together sequence-specific (SR family proteins, SFRS4, SFRS5 and TRA2B/SFRS10) and basal snRNP (SNRP70 and SNRPA1) factors of the spliceosome. Stimulates mRNA 3'-end cleavage independently of the formation of an exon junction complex. Binds both pre-mRNA and spliced mRNA 20-25 nt upstream of exon-exon junctions. Binds RNA and DNA with low sequence specificity and has similar preference for either double- or single-stranded nucleic acid substrates. The protein is Serine/arginine repetitive matrix protein 1 (Srrm1) of Mus musculus (Mouse).